The following is a 222-amino-acid chain: Gamma-glutamylcyclotransferase and putative RNase MJ0434 (222 aa).

Arginine 75 is an active-site residue. Residues 75-82 (RDILIRKY) carry the RX(4)HXY motif motif. The residue at position 82 (tyrosine 82) is an O-di-AMP-tyrosine.

The protein in the N-terminal section; belongs to the HepT RNase toxin family. It in the C-terminal section; belongs to the gamma-glutamylcyclotransferase family. As to quaternary structure, homodimer, probably forms a complex with cognate antitoxin MJ0435. Modified by cognate antitoxin MJ0435; probably at least 2 successive AMPylation events occur on Tyr-82.

Probable toxic component of a putative type VII toxin-antitoxin (TA) system, probably an RNase. Probably neutralized by cognate antitoxin MJ0435. Neutralization may be due to AMPylation by MJ0435. The protein is Gamma-glutamylcyclotransferase and putative RNase MJ0434 of Methanocaldococcus jannaschii (strain ATCC 43067 / DSM 2661 / JAL-1 / JCM 10045 / NBRC 100440) (Methanococcus jannaschii).